An 868-amino-acid polypeptide reads, in one-letter code: Transcription factor pynR (868 aa).

Residues Cys11–Cys37 constitute a DNA-binding region (zn(2)-C6 fungal-type). Disordered stretches follow at residues Asn51–Val88, Leu662–Ser683, Ser715–Leu761, and Gly829–Asn868. Composition is skewed to low complexity over residues Ser663–Ser683 and Ser715–His727.

The protein resides in the nucleus. Functionally, transcription factor that regulates the expression of the gene cluster that mediates the biosynthesis of pyranonigrins, a family of antioxidative compounds. The sequence is that of Transcription factor pynR from Aspergillus niger (strain ATCC MYA-4892 / CBS 513.88 / FGSC A1513).